The primary structure comprises 345 residues: Prenyltransferase ltmC (345 aa).

Histidine 112 contributes to the substrate binding site. Aspartate 119 and aspartate 123 together coordinate Mg(2+). Position 128 (arginine 128) interacts with substrate. The N-linked (GlcNAc...) asparagine glycan is linked to asparagine 130. The substrate site is built by lysine 212, threonine 213, glutamine 243, asparagine 250, and lysine 260.

The protein belongs to the FPP/GGPP synthase family. The cofactor is Mg(2+).

It participates in secondary metabolite biosynthesis. Prenyltransferase; part of the gene cluster that mediates the biosynthesis of lolitrems, indole-diterpene mycotoxins that are potent tremorgens in mammals, and are synthesized by clavicipitaceous fungal endophytes in association with their grass hosts. The geranylgeranyl diphosphate (GGPP) synthase ltmG is proposed to catalyze the first step in lolitrem biosynthesis. LtmG catalyzes a series of iterative condensations of isopentenyl diphosphate (IPP) with dimethylallyl diphosphate (DMAPP), geranyl diphosphate (GPP), and farnesyl diphosphate (FPP), to form GGPP. GGPP then condenses with indole-3-glycerol phosphate to form 3-geranylgeranylindole, an acyclic intermediate, to be incorporated into paxilline. Either ltmG or ltmC could be responsible for this step, as both are putative prenyl transferases. The FAD-dependent monooxygenase ltmM then catalyzes the epoxidation of the two terminal alkenes of the geranylgeranyl moiety, which is subsequently cyclized by ltmB, to paspaline. The cytochrome P450 monooxygenases ltmQ and ltmP can sequentially oxidize paspaline to terpendole E and terpendole F. Alternatively, ltmP converts paspaline to an intermediate which is oxidized by ltmQ to terpendole F. LtmF, ltmK, ltmE and ltmJ appear to be unique to the epichloe endophytes. The prenyltransferase ltmF is involved in the 27-hydroxyl-O-prenylation. The cytochrome P450 monooxygenase ltmK is required for the oxidative acetal ring formation. The multi-functional prenyltransferase ltmE is required for C20- and C21-prenylations of the indole ring of paspalanes and acts together with the cytochrome P450 monooxygenase ltmJ to yield lolitremanes by multiple oxidations and ring closures. The stereoisomer pairs of lolitriol and lolitrem N or lolitrem B and lolitrem F may be attributed to variations in the way in which ring closure can occur under the action of ltmJ. While the major product of this pathway is lolitrem B, the prenyl transferases and cytochrome P450 monooxygenases identified in this pathway have a remarkable versatility in their regio- and stereo-specificities to generate a diverse range of metabolites that are products of a metabolic grid rather than a linear pathway. The sequence is that of Prenyltransferase ltmC from Epichloe festucae var. lolii (Neotyphodium lolii).